Here is a 539-residue protein sequence, read N- to C-terminus: Carboxypeptidase Y homolog A (539 aa).

The N-terminal stretch at 1–17 (MKALTATLLVGTALAAV) is a signal peptide. The propeptide occupies 18–122 (PPQQPIQVPT…KLEKYDLRVK (105 aa)). Intrachain disulfides connect C176-C416, C310-C324, C334-C357, C341-C350, and C379-C386. Residue N207 is glycosylated (N-linked (GlcNAc...) asparagine). Residue S263 is part of the active site. D455 is a catalytic residue. A glycan (N-linked (GlcNAc...) asparagine) is linked at N506. Residue H517 is part of the active site.

It belongs to the peptidase S10 family.

Its subcellular location is the vacuole. It catalyses the reaction Release of a C-terminal amino acid with broad specificity.. Vacuolar carboxypeptidase involved in degradation of small peptides. Digests preferentially peptides containing an aliphatic or hydrophobic residue in P1' position, as well as methionine, leucine or phenylalanine in P1 position of ester substrate. This chain is Carboxypeptidase Y homolog A (cpyA), found in Coccidioides posadasii (strain C735) (Valley fever fungus).